The sequence spans 112 residues: Large ribosomal subunit protein uL22 (112 aa).

Belongs to the universal ribosomal protein uL22 family. As to quaternary structure, part of the 50S ribosomal subunit.

This protein binds specifically to 23S rRNA; its binding is stimulated by other ribosomal proteins, e.g. L4, L17, and L20. It is important during the early stages of 50S assembly. It makes multiple contacts with different domains of the 23S rRNA in the assembled 50S subunit and ribosome. Functionally, the globular domain of the protein is located near the polypeptide exit tunnel on the outside of the subunit, while an extended beta-hairpin is found that lines the wall of the exit tunnel in the center of the 70S ribosome. This chain is Large ribosomal subunit protein uL22, found in Anaplasma phagocytophilum (strain HZ).